We begin with the raw amino-acid sequence, 344 residues long: L-rhamnose-proton symporter (344 aa).

10 consecutive transmembrane segments (helical) span residues 4 to 24, 38 to 58, 68 to 88, 101 to 121, 131 to 151, 175 to 195, 214 to 234, 259 to 279, 290 to 310, and 323 to 343; these read AITM…CFYA, WSVG…ATLL, FSAS…IGNI, MGIG…TPII, TQGG…VGIV, LLLA…MNAA, LPSY…FCFI, LLLS…YAWG, MSWM…GLVL, and VLSL…LGMA.

This sequence belongs to the L-rhamnose transporter (TC 2.A.7.6) family.

It localises to the cell inner membrane. It carries out the reaction L-rhamnopyranose(in) + H(+)(in) = L-rhamnopyranose(out) + H(+)(out). Functionally, uptake of L-rhamnose across the cytoplasmic membrane with the concomitant transport of protons into the cell (symport system). In Klebsiella pneumoniae subsp. pneumoniae (strain ATCC 700721 / MGH 78578), this protein is L-rhamnose-proton symporter.